The sequence spans 328 residues: MLNEFPIFDYEDIQLIPNKCVIKSRAEADTSVTLGNHTFKLPVVPANMQTILDENVAEQLAKGGYFYIMHRFDEAGRIPFIKRMHNQGLIASISVGVKDYEYDFVSQLKADTPEYITIDIAHGHADSVISMIQHIKKELPDTFVIAGNVGTPEAVRELENAGADATKVGIGPGKVCITKVKTGFGTGGWQLAALRWCAKAARKPIIADGGIRTHGDIAKSIRFGASMIMIGSLFAGHIESPGKTIEVDGEQFKEYYGSASQYQKGAYKNVEGKRILLPAKGHLQDTLTEMEQDLQSAISYAGGRQVADLKHVDYVIVKNSIWNGDASH.

The Thioimidate intermediate role is filled by cysteine 176. Residue 205-228 (IIADGGIRTHGDIAKSIRFGASMI) coordinates NADP(+).

This sequence belongs to the IMPDH/GMPR family. GuaC type 2 subfamily.

It carries out the reaction IMP + NH4(+) + NADP(+) = GMP + NADPH + 2 H(+). Functionally, catalyzes the irreversible NADPH-dependent deamination of GMP to IMP. It functions in the conversion of nucleobase, nucleoside and nucleotide derivatives of G to A nucleotides, and in maintaining the intracellular balance of A and G nucleotides. The chain is GMP reductase from Streptococcus pneumoniae serotype 4 (strain ATCC BAA-334 / TIGR4).